A 574-amino-acid polypeptide reads, in one-letter code: FAD-linked oxidoreductase penH (574 aa).

Residues 1–25 (MLPRALTLSALLALLLAIYLALAPA) form the signal peptide. N-linked (GlcNAc...) asparagine glycosylation is found at asparagine 48, asparagine 107, asparagine 193, asparagine 368, and asparagine 385. In terms of domain architecture, FAD-binding PCMH-type spans 121-305 (HQGRIPLYAA…VRVTMRTYPD (185 aa)).

Belongs to the oxygen-dependent FAD-linked oxidoreductase family. The cofactor is FAD.

The enzyme catalyses peniprequinolone + A = yaequinolone E + AH2. It functions in the pathway secondary metabolite biosynthesis. The protein operates within alkaloid biosynthesis. It participates in mycotoxin biosynthesis. Functionally, FAD-linked oxidoreductase; part of the gene cluster that mediates the biosynthesis of penigequinolones, potent insecticidal alkaloids that contain a highly modified 10-carbon prenyl group. The first stage is catalyzed by the nonribosomal peptide synthetase penN that condenses anthranilic acid and O-methyl-L-tyrosine to produce 4'-methoxycyclopeptin. 4'-methoxycyclopeptin is then converted to 4'-methoxydehydrocyclopeptin by the ketoglutarate-dependent dioxygenase penM through dehydrogenation to form a double bond between C-alpha and C-beta of the O-methyltyrosine side chain. PenM also converts its first product methoxydehydrocyclopeptin to 4'-methoxycyclopenin. The following conversion of 4'methoxycyclopenin into 4'-methoxyviridicatin is catalyzed by the cyclopenase penL. 4'-methoxyviridicatin is the precursor of quinolone natural products, and is further converted to quinolinone B. The prenyltransferase penI then catalyzes the canonical Friedel-Crafts alkylation of quinolinone B with dimethylallyl cation to yield dimethylallyl quinolone, which is subjected to FAD-dependent dehydrogenation by the FAD-linked oxidoreductase penH to yield conjugated aryl diene. The delta(3') double bond then serves as the site of the second alkylation with DMAPP catalyzed by the prenyltransferase penG to yield a carbenium ion intermediate, which can be attacked by H(2)O to yield a styrenyl quinolone containing a C3'-hydroxyprenyl chain, or undergo cyclization to yield yaequinolones J1 and J2. The conversion of the styrenyl quinolone into the tetrahydrofuran-containing yaequinolone C is performed by the FAD-dependent monooxygenase penE and involves epoxidation of the terminal C7'-C8' olefin, followed by epoxide ring opening initiated by the C3' hydroxyl group. The predicted cysteine hydrolase penJ acts as an epoxide hydrolase that enhances the rate of the 5-exo-tet cyclization step, increasing the yield of yaequinolone C. PenF catalyzes the cationic rearrangement of the epoxide formed by penE (before ring opening to produce yaequinolone C) into yaequinolone D. Finally, the short-chain dehydrogenase/reductase (SDR)-like reductase penD, catalyzes both the dehydration of yaequinolone D and the reduction of the resulting oxonium to yield penigequinolone. This Penicillium thymicola protein is FAD-linked oxidoreductase penH.